The following is a 712-amino-acid chain: Polyribonucleotide nucleotidyltransferase (712 aa).

Positions 487 and 493 each coordinate Mg(2+). The KH domain occupies 554 to 613 (PRIHTMKISVEKIKDVIGKGGAVIRQLTEETGTTIEIEDDGTIKIAATDGDQAKEAIRRI). Residues 623–691 (GVIYTGKVAR…RQGRVRLSMK (69 aa)) form the S1 motif domain.

The protein belongs to the polyribonucleotide nucleotidyltransferase family. In terms of assembly, component of the RNA degradosome, which is a multiprotein complex involved in RNA processing and mRNA degradation. Mg(2+) serves as cofactor.

The protein resides in the cytoplasm. The enzyme catalyses RNA(n+1) + phosphate = RNA(n) + a ribonucleoside 5'-diphosphate. Functionally, involved in mRNA degradation. Catalyzes the phosphorolysis of single-stranded polyribonucleotides processively in the 3'- to 5'-direction. This is Polyribonucleotide nucleotidyltransferase from Vibrio cholerae serotype O1 (strain ATCC 39541 / Classical Ogawa 395 / O395).